We begin with the raw amino-acid sequence, 233 residues long: MGQKVNPIGLRLGINRNWESRWFPTKANLVENIGEDYKIRAFLKRKLYYAGISQILVERTAKKLRVTVVAARPGIIIGKKGSDVDNLRKELQDLISKDVNINIKEERKAGASAQLAAESVATQLEKRIAFRRAMKKVIQGAQKAGAKGIKVSVSGRLGGAEMARTEWYLEGRVPLHTLRAKIDYGFAEARTTYGNIGVKVWIFKGEVLHKGMQPEKTEESAPAKKSRRTRRGK.

The KH type-2 domain occupies 39–107 (IRAFLKRKLY…DVNINIKEER (69 aa)). Basic and acidic residues predominate over residues 212–222 (MQPEKTEESAP). Residues 212–233 (MQPEKTEESAPAKKSRRTRRGK) form a disordered region. Residues 224–233 (KKSRRTRRGK) show a composition bias toward basic residues.

Belongs to the universal ribosomal protein uS3 family. Part of the 30S ribosomal subunit. Forms a tight complex with proteins S10 and S14.

Binds the lower part of the 30S subunit head. Binds mRNA in the 70S ribosome, positioning it for translation. This chain is Small ribosomal subunit protein uS3, found in Campylobacter jejuni subsp. doylei (strain ATCC BAA-1458 / RM4099 / 269.97).